The primary structure comprises 237 residues: Concanavalin-Br (237 aa).

Positions 8 and 10 each coordinate Mn(2+). Ca(2+) contacts are provided by D10, Y12, N14, and D19. Y12 is an a carbohydrate binding site. Mn(2+)-binding residues include D19, H24, and S34. 99–100 contributes to the a carbohydrate binding site; that stretch reads LY. Position 208 (D208) interacts with Ca(2+). An a carbohydrate-binding site is contributed by R228.

The protein belongs to the leguminous lectin family. As to quaternary structure, homotetramer.

Its function is as follows. Glucose/D-mannose specific lectin. Has anti-inflammatory activity in rats. Induces histamine release in mast cells from hamster and rat. Induces lymphocyte proliferation and IFNG production. Shows toxicity against the aquatic snail B.glabrata at concentrations higher than 20 ug/ml. The sequence is that of Concanavalin-Br from Canavalia brasiliensis (Brazilian jack bean).